The primary structure comprises 323 residues: Aldo-keto reductase family 1 member C2 (323 aa).

NADP(+) contacts are provided by residues Gly-20–Tyr-24 and Asp-50. Tyr-24 is a binding site for substrate. Catalysis depends on Tyr-55, which acts as the Proton donor. Substrate is bound at residue His-117. Residues Ser-166–Asn-167, Gln-190, and Tyr-216–His-222 contribute to the NADP(+) site. Residues His-222 and Trp-227 each contribute to the substrate site. NADP(+) is bound at residue Lys-270 to Asn-280.

It belongs to the aldo/keto reductase family. Expressed in fetal testes. Expressed in fetal and adult adrenal glands.

Its subcellular location is the cytoplasm. It localises to the cytosol. It catalyses the reaction a 3alpha-hydroxysteroid + NADP(+) = a 3-oxosteroid + NADPH + H(+). It carries out the reaction a 3alpha-hydroxysteroid + NAD(+) = a 3-oxosteroid + NADH + H(+). The catalysed reaction is 5alpha-androstane-3alpha,17beta-diol + NADP(+) = 17beta-hydroxy-5alpha-androstan-3-one + NADPH + H(+). The enzyme catalyses 5alpha-androstane-3alpha,17beta-diol + NAD(+) = 17beta-hydroxy-5alpha-androstan-3-one + NADH + H(+). It catalyses the reaction 5alpha-androstane-3alpha,17beta-diol + NAD(+) = androsterone + NADH + H(+). It carries out the reaction 17beta-estradiol + NADP(+) = estrone + NADPH + H(+). The catalysed reaction is 17beta-estradiol + NAD(+) = estrone + NADH + H(+). The enzyme catalyses (20S)-hydroxypregn-4-en-3-one + NADP(+) = progesterone + NADPH + H(+). It catalyses the reaction (20S)-hydroxypregn-4-en-3-one + NAD(+) = progesterone + NADH + H(+). It carries out the reaction androsterone + NADP(+) = 5alpha-androstan-3,17-dione + NADPH + H(+). The catalysed reaction is (3beta,5alpha,17beta)-3-hydroxy-androstan-17-yl sulfate + NADP(+) = 5alpha-dihydrotestosterone sulfate + NADPH + H(+). The enzyme catalyses (1R,2R)-1,2-dihydrobenzene-1,2-diol + NADP(+) = catechol + NADPH + H(+). It catalyses the reaction (S)-indan-1-ol + NAD(+) = indan-1-one + NADH + H(+). It carries out the reaction (S)-indan-1-ol + NADP(+) = indan-1-one + NADPH + H(+). It functions in the pathway steroid metabolism. Inhibited by hexestrol with an IC(50) of 2.8 uM, 1,10-phenanthroline with an IC(50) of 2100 uM, 1,7-phenanthroline with an IC(50) of 1500 uM, flufenamic acid with an IC(50) of 0.9 uM, indomethacin with an IC(50) of 75 uM, ibuprofen with an IC(50) of 6.9 uM, lithocholic acid with an IC(50) of 0.07 uM, ursodeoxycholic acid with an IC(50) of 0.08 uM and chenodeoxycholic acid with an IC(50) of 0.13 uM. The oxidation reaction is inhibited by low micromolar concentrations of NADPH. Its function is as follows. Cytosolic aldo-keto reductase that catalyzes the NADH and NADPH-dependent reduction of ketosteroids to hydroxysteroids. Most probably acts as a reductase in vivo since the oxidase activity measured in vitro is inhibited by physiological concentrations of NADPH. Displays a broad positional specificity acting on positions 3, 17 and 20 of steroids and regulates the metabolism of hormones like estrogens and androgens. Works in concert with the 5-alpha/5-beta-steroid reductases to convert steroid hormones into the 3-alpha/5-alpha and 3-alpha/5-beta-tetrahydrosteroids. Catalyzes the inactivation of the most potent androgen 5-alpha-dihydrotestosterone (5-alpha-DHT) to 5-alpha-androstane-3-alpha,17-beta-diol (3-alpha-diol). Also specifically able to produce 17beta-hydroxy-5alpha-androstan-3-one/5alphaDHT. May also reduce conjugated steroids such as 5alpha-dihydrotestosterone sulfate. Displays affinity for bile acids. The sequence is that of Aldo-keto reductase family 1 member C2 (AKR1C2) from Homo sapiens (Human).